Reading from the N-terminus, the 438-residue chain is Gamma-glutamyl phosphate reductase (438 aa).

The tract at residues 1 to 21 (MTAQTSSDVTDQKTDLTRESE) is disordered. A compositionally biased stretch (basic and acidic residues) spans 10 to 21 (TDQKTDLTRESE).

The protein belongs to the gamma-glutamyl phosphate reductase family.

The protein localises to the cytoplasm. It carries out the reaction L-glutamate 5-semialdehyde + phosphate + NADP(+) = L-glutamyl 5-phosphate + NADPH + H(+). Its pathway is amino-acid biosynthesis; L-proline biosynthesis; L-glutamate 5-semialdehyde from L-glutamate: step 2/2. In terms of biological role, catalyzes the NADPH-dependent reduction of L-glutamate 5-phosphate into L-glutamate 5-semialdehyde and phosphate. The product spontaneously undergoes cyclization to form 1-pyrroline-5-carboxylate. This is Gamma-glutamyl phosphate reductase from Corynebacterium efficiens (strain DSM 44549 / YS-314 / AJ 12310 / JCM 11189 / NBRC 100395).